The chain runs to 296 residues: 1,2-beta-oligomannan phosphorylase (296 aa).

Belongs to the glycosyl hydrolase 130 family. Homodimer.

It catalyses the reaction [(1-&gt;2)-beta-D-mannosyl](n) + phosphate = [(1-&gt;2)-beta-D-mannosyl](n-1) + alpha-D-mannose 1-phosphate. It functions in the pathway nucleotide-sugar biosynthesis; GDP-alpha-D-mannose biosynthesis. Probably involved in a salvage pathway for GDP-D-mannose biosynthesis. Catalyzes the reversible phosphorolysis of 1,2-beta-oligomannan. In phosphorolytic reactions, prefers 1,2-beta-oligomannan with a degree of polymerization (DP) of 3, 4 and 5. Produces alpha-D-mannose 1-phosphate, which is the precursor of GDP-D-mannose. This chain is 1,2-beta-oligomannan phosphorylase, found in Thermoanaerobacter sp. (strain X514).